We begin with the raw amino-acid sequence, 484 residues long: N-succinylglutamate 5-semialdehyde dehydrogenase (484 aa).

NAD(+) is bound at residue 221–226; that stretch reads GSAAAG. Catalysis depends on residues E244 and C278.

This sequence belongs to the aldehyde dehydrogenase family. AstD subfamily.

The catalysed reaction is N-succinyl-L-glutamate 5-semialdehyde + NAD(+) + H2O = N-succinyl-L-glutamate + NADH + 2 H(+). Its pathway is amino-acid degradation; L-arginine degradation via AST pathway; L-glutamate and succinate from L-arginine: step 4/5. In terms of biological role, catalyzes the NAD-dependent reduction of succinylglutamate semialdehyde into succinylglutamate. This chain is N-succinylglutamate 5-semialdehyde dehydrogenase, found in Caulobacter sp. (strain K31).